We begin with the raw amino-acid sequence, 331 residues long: Meiotically up-regulated gene 172 protein (331 aa).

Residues 72–166 are a coiled coil; that stretch reads IKNNEYEKQR…KGNYGLVKAR (95 aa).

The protein belongs to the ADIP family.

It localises to the cytoplasm. Has a role in meiosis. In Schizosaccharomyces pombe (strain 972 / ATCC 24843) (Fission yeast), this protein is Meiotically up-regulated gene 172 protein (mug172).